Consider the following 705-residue polypeptide: Effector protein hopD1 (705 aa).

2 stretches are compositionally biased toward polar residues: residues 1–11 and 28–41; these read MNPLRSIQHNI and QAQQSHPKRISPSQ. Disordered stretches follow at residues 1–41 and 173–207; these read MNPL…SPSQ and SSSLETPLLSSPDHSRPPSQPKPVHIGSVRRDSGS. The span at 173-184 shows a compositional bias: low complexity; that stretch reads SSSLETPLLSSP.

It is found in the secreted. Its function is as follows. Effector protein involved in non-host recognition. The polypeptide is Effector protein hopD1 (hopD1) (Pseudomonas syringae pv. tomato (strain ATCC BAA-871 / DC3000)).